The sequence spans 379 residues: UDP-4-amino-4-deoxy-L-arabinose--oxoglutarate aminotransferase (379 aa).

Position 182 is an N6-(pyridoxal phosphate)lysine (lysine 182).

It belongs to the DegT/DnrJ/EryC1 family. ArnB subfamily. As to quaternary structure, homodimer. Pyridoxal 5'-phosphate serves as cofactor.

It carries out the reaction UDP-4-amino-4-deoxy-beta-L-arabinose + 2-oxoglutarate = UDP-beta-L-threo-pentopyranos-4-ulose + L-glutamate. It functions in the pathway nucleotide-sugar biosynthesis; UDP-4-deoxy-4-formamido-beta-L-arabinose biosynthesis; UDP-4-deoxy-4-formamido-beta-L-arabinose from UDP-alpha-D-glucuronate: step 2/3. It participates in bacterial outer membrane biogenesis; lipopolysaccharide biosynthesis. Functionally, catalyzes the conversion of UDP-4-keto-arabinose (UDP-Ara4O) to UDP-4-amino-4-deoxy-L-arabinose (UDP-L-Ara4N). The modified arabinose is attached to lipid A and is required for resistance to polymyxin and cationic antimicrobial peptides. The sequence is that of UDP-4-amino-4-deoxy-L-arabinose--oxoglutarate aminotransferase from Klebsiella pneumoniae (strain 342).